The following is a 201-amino-acid chain: ATP-dependent Clp protease proteolytic subunit 2 (201 aa).

The active-site Nucleophile is the S101. H126 is an active-site residue.

This sequence belongs to the peptidase S14 family. In terms of assembly, fourteen ClpP subunits assemble into 2 heptameric rings which stack back to back to give a disk-like structure with a central cavity, resembling the structure of eukaryotic proteasomes.

Its subcellular location is the cytoplasm. The catalysed reaction is Hydrolysis of proteins to small peptides in the presence of ATP and magnesium. alpha-casein is the usual test substrate. In the absence of ATP, only oligopeptides shorter than five residues are hydrolyzed (such as succinyl-Leu-Tyr-|-NHMec, and Leu-Tyr-Leu-|-Tyr-Trp, in which cleavage of the -Tyr-|-Leu- and -Tyr-|-Trp bonds also occurs).. Its function is as follows. Cleaves peptides in various proteins in a process that requires ATP hydrolysis. Has a chymotrypsin-like activity. Plays a major role in the degradation of misfolded proteins. The protein is ATP-dependent Clp protease proteolytic subunit 2 of Prochlorococcus marinus subsp. pastoris (strain CCMP1986 / NIES-2087 / MED4).